The following is a 632-amino-acid chain: Epsin-3 (632 aa).

A 1,2-diacyl-sn-glycero-3-phospho-(1D-myo-inositol-4,5-bisphosphate) contacts are provided by Arg-8, Lys-11, Arg-25, Asn-30, Arg-63, and His-73. The ENTH domain maps to 12–144 (NIVHNYSEAE…KDEERLRQER (133 aa)). The disordered stretch occupies residues 172–214 (YGEDYSRSRGSPSSYNSSSSSPRYTSDLEQARPQTSGEEELQL). Positions 179–196 (SRGSPSSYNSSSSSPRYT) are enriched in low complexity. Residues Ser-191 and Ser-192 each carry the phosphoserine modification. UIM domains follow at residues 209–228 (EEEL…AEKP) and 236–255 (DEDL…HEKE). A disordered region spans residues 257 to 296 (RSWQGDGSPMANGAGAVVHHQRDREPEREERKEEEKLKTS). The residue at position 264 (Ser-264) is a Phosphoserine. Over residues 276 to 294 (HQRDREPEREERKEEEKLK) the composition is skewed to basic and acidic residues. Repeat copies occupy residues 321–323 (DPW), 344–346 (DPW), 371–373 (EPW), 387–389 (DPW), 404–406 (DPW), 524–526 (NPF), 537–539 (NPF), and 629–631 (NPF). Residues 321–406 (DPWDIPGFRP…KLPSTGADPW (86 aa)) are 5 X 3 AA repeats of [DE]-P-W. Disordered stretches follow at residues 326–501 (PGFR…SFLG), 525–560 (PFLT…PALG), and 604–632 (AFAP…NPFL). Polar residues predominate over residues 353–371 (TVLSRSQPWDLTPMLSSSE). The interval 524-631 (NPFLTGLSAP…PPPQTGTNPF (108 aa)) is 3 X 3 AA repeats of N-P-F.

This sequence belongs to the epsin family. As to expression, detected in migrating keratinocytes from wounded skin, but not in differentiating keratinocytes or in normal skin. Detected in chronic wounds, basal cell carcinoma and ulcerative colitis.

The protein localises to the cytoplasm. The protein resides in the perinuclear region. Its subcellular location is the cytoplasmic vesicle. It localises to the clathrin-coated vesicle. It is found in the nucleus. The sequence is that of Epsin-3 (EPN3) from Homo sapiens (Human).